A 232-amino-acid polypeptide reads, in one-letter code: Octanoyltransferase (232 aa).

Residues 40 to 226 (GSAPERVWLL…TWQDLFGSVP (187 aa)) enclose the BPL/LPL catalytic domain. Residues 79–86 (RGGQWTYH), 157–159 (ALG), and 170–172 (GVA) contribute to the substrate site. C188 functions as the Acyl-thioester intermediate in the catalytic mechanism.

The protein belongs to the LipB family.

The protein resides in the cytoplasm. It catalyses the reaction octanoyl-[ACP] + L-lysyl-[protein] = N(6)-octanoyl-L-lysyl-[protein] + holo-[ACP] + H(+). The protein operates within protein modification; protein lipoylation via endogenous pathway; protein N(6)-(lipoyl)lysine from octanoyl-[acyl-carrier-protein]: step 1/2. Its function is as follows. Catalyzes the transfer of endogenously produced octanoic acid from octanoyl-acyl-carrier-protein onto the lipoyl domains of lipoate-dependent enzymes. Lipoyl-ACP can also act as a substrate although octanoyl-ACP is likely to be the physiological substrate. This chain is Octanoyltransferase, found in Gluconacetobacter diazotrophicus (strain ATCC 49037 / DSM 5601 / CCUG 37298 / CIP 103539 / LMG 7603 / PAl5).